The following is a 443-amino-acid chain: Oxygen-dependent coproporphyrinogen-III oxidase, mitochondrial (443 aa).

The transit peptide at Met-1–Arg-98 directs the protein to the mitochondrion. The interval Glu-89 to Leu-112 is disordered. Residue Ser-101 is modified to Phosphoserine. The span at Gly-103–Leu-112 shows a compositional bias: basic and acidic residues. The important for dimerization stretch occupies residues Val-182–Lys-191. A coproporphyrinogen III-binding site is contributed by Ser-233. His-247 acts as the Proton donor in catalysis. Asn-249 to Arg-251 serves as a coordination point for coproporphyrinogen III. The important for dimerization stretch occupies residues Tyr-381 to Glu-417. N6-acetyllysine; alternate is present on Lys-393. Lys-393 is subject to N6-succinyllysine; alternate. Position 400–402 (Gly-400–Arg-402) interacts with coproporphyrinogen III.

This sequence belongs to the aerobic coproporphyrinogen-III oxidase family. In terms of assembly, homodimer. In terms of tissue distribution, expressed in erythroid cells. Expressed in liver.

Its subcellular location is the mitochondrion intermembrane space. It catalyses the reaction coproporphyrinogen III + O2 + 2 H(+) = protoporphyrinogen IX + 2 CO2 + 2 H2O. It functions in the pathway porphyrin-containing compound metabolism; protoporphyrin-IX biosynthesis; protoporphyrinogen-IX from coproporphyrinogen-III (O2 route): step 1/1. Functionally, involved in the heme biosynthesis. Catalyzes the aerobic oxidative decarboxylation of propionate groups of rings A and B of coproporphyrinogen-III to yield the vinyl groups in protoporphyrinogen-IX. The sequence is that of Oxygen-dependent coproporphyrinogen-III oxidase, mitochondrial (Cpox) from Mus musculus (Mouse).